Consider the following 364-residue polypeptide: Hepatitis A virus cellular receptor 1 (364 aa).

Positions 1–20 (MHPQVVILSLILHLADSVAG) are cleaved as a signal peptide. Residues 21–121 (SVKVGGEAGP…WFNDMKITVS (101 aa)) enclose the Ig-like V-type domain. The Extracellular portion of the chain corresponds to 21 to 295 (SVKVGGEAGP…SLLTANTTKG (275 aa)). Cystine bridges form between cysteine 36-cysteine 105, cysteine 46-cysteine 57, and cysteine 52-cysteine 104. N-linked (GlcNAc...) asparagine glycosylation is present at asparagine 65. A run of 12 repeats spans residues 138–143 (VPTVTT), 144–149 (VRTSTT), 150–155 (VPTTTT), 156–160 (VPMTT), 161–165 (VPTTT), 166–171 (VPTTMS), 172–177 (IPTTTT), 178–183 (VLTTMT), 184–189 (VSTTTS), 190–195 (VPTTTS), 196–201 (IPTTTS), and 202–207 (VPVTTT). Residues 138-207 (VPTVTTVRTS…TTTSVPVTTT (70 aa)) form a 12 X 6 AA approximate tandem repeats of V-P-T-T-T-T] region. Residues 216 to 257 (PLPRQNHEPVATSPSSPQPAETHPTTLQGAIRREPTSSPLYS) form a disordered region. Residues 227 to 243 (TSPSSPQPAETHPTTLQ) show a composition bias toward polar residues. Residues asparagine 263, asparagine 277, and asparagine 291 are each glycosylated (N-linked (GlcNAc...) asparagine). A helical transmembrane segment spans residues 296–316 (IYAGVCISVLVLLALLGVIIA). The Cytoplasmic portion of the chain corresponds to 317–364 (KKYFFKKEVQQLSVSFSSLQIKALQNAVEKEVQAEDNIYIENSLYATD). Residues lysine 338 and lysine 346 each participate in a glycyl lysine isopeptide (Lys-Gly) (interchain with G-Cter in ubiquitin) cross-link.

Belongs to the immunoglobulin superfamily. TIM family. Interacts with STAM. Interacts with SELPLG. As to quaternary structure, (Microbial infection) Interacts with hepatitis A virus capsid proteins. In terms of assembly, (Microbial infection) Interacts with Ebolavirus envelope glycoprotein GP. (Microbial infection) Interacts with Zika virus envelope protein E. Post-translationally, ubiquitinated at two lysine residues Lys-338 and Lys-346 on its cytoplasmic domain. Ubiquitination promotes receptor endocytosis and target receptors for lysosomal degradation and termination of receptor signaling. (Microbial infection) Ubiquitination is required for Dengue virus endocytosis. In terms of tissue distribution, widely expressed, with highest levels in kidney and testis. Expressed by activated CD4+ T-cells during the development of helper T-cells responses.

It localises to the cell membrane. Functionally, phosphatidylserine receptor that plays an important functional role in regulatory B-cells homeostasis including generation, expansion and suppressor functions. As P-selectin/SELPLG ligand, plays a specialized role in activated but not naive T-cell trafficking during inflammatory responses. Controls thereby T-cell accumulation in the inflamed central nervous system (CNS) and the induction of autoimmune disease. Also regulates expression of various anti-inflammatory cytokines and co-inhibitory ligands including IL10. Acts as a regulator of T-cell proliferation. May play a role in kidney injury and repair. (Microbial infection) Acts as a receptor for Hepatitis A virus. In terms of biological role, (Microbial infection) Acts as a receptor for Ebolavirus and Marburg virus by binding exposed phosphatidyl-serine at the surface of virion membrane. Serves as a dual receptor for Ebolavirus by also interacting with envelope glycoprotein GP. Its function is as follows. (Microbial infection) Acts as a receptor for Dengue virus by binding exposed phosphatidyl-serine at the surface of virion membrane. TIM1 and Dengue virus are co-internalized during virus entry. Functionally, (Microbial infection) Acts as a receptor for Zika virus by binding to envelope protein E. (Microbial infection) Plays a positive role in Chikungunya virus cell entry. In Homo sapiens (Human), this protein is Hepatitis A virus cellular receptor 1 (HAVCR1).